Consider the following 246-residue polypeptide: tRNA pseudouridine synthase A (246 aa).

Residue Asp53 is the Nucleophile of the active site. Position 111 (Tyr111) interacts with substrate.

This sequence belongs to the tRNA pseudouridine synthase TruA family. In terms of assembly, homodimer.

It catalyses the reaction uridine(38/39/40) in tRNA = pseudouridine(38/39/40) in tRNA. Formation of pseudouridine at positions 38, 39 and 40 in the anticodon stem and loop of transfer RNAs. In Lysinibacillus sphaericus (strain C3-41), this protein is tRNA pseudouridine synthase A.